The primary structure comprises 251 residues: Octanoyltransferase (251 aa).

Positions 49–230 (DEIADQILVL…DLDDAFAGRL (182 aa)) constitute a BPL/LPL catalytic domain. Substrate-binding positions include 87–94 (RGGRITWH), 160–162 (ALG), and 173–175 (GLA). Residue C191 is the Acyl-thioester intermediate of the active site.

It belongs to the LipB family.

The protein localises to the cytoplasm. It carries out the reaction octanoyl-[ACP] + L-lysyl-[protein] = N(6)-octanoyl-L-lysyl-[protein] + holo-[ACP] + H(+). It functions in the pathway protein modification; protein lipoylation via endogenous pathway; protein N(6)-(lipoyl)lysine from octanoyl-[acyl-carrier-protein]: step 1/2. Catalyzes the transfer of endogenously produced octanoic acid from octanoyl-acyl-carrier-protein onto the lipoyl domains of lipoate-dependent enzymes. Lipoyl-ACP can also act as a substrate although octanoyl-ACP is likely to be the physiological substrate. This Corynebacterium efficiens (strain DSM 44549 / YS-314 / AJ 12310 / JCM 11189 / NBRC 100395) protein is Octanoyltransferase.